The sequence spans 158 residues: Phosphopantetheine adenylyltransferase (158 aa).

Residue Thr10 coordinates substrate. Residues 10–11 (TF) and His18 contribute to the ATP site. Positions 42, 74, and 88 each coordinate substrate. ATP-binding positions include 89–91 (GIR), Glu99, and 124–130 (WRYLSST).

The protein belongs to the bacterial CoaD family. In terms of assembly, homohexamer. Mg(2+) serves as cofactor.

Its subcellular location is the cytoplasm. The catalysed reaction is (R)-4'-phosphopantetheine + ATP + H(+) = 3'-dephospho-CoA + diphosphate. The protein operates within cofactor biosynthesis; coenzyme A biosynthesis; CoA from (R)-pantothenate: step 4/5. Reversibly transfers an adenylyl group from ATP to 4'-phosphopantetheine, yielding dephospho-CoA (dPCoA) and pyrophosphate. The sequence is that of Phosphopantetheine adenylyltransferase from Actinobacillus pleuropneumoniae serotype 5b (strain L20).